The following is a 704-amino-acid chain: Elongation factor G (704 aa).

A tr-type G domain is found at 10-290 (TKVRNIGIMA…AVVDYLPSPL (281 aa)). GTP-binding positions include 19-26 (AHIDAGKT), 83-87 (DTPGH), and 137-140 (NKMD).

It belongs to the TRAFAC class translation factor GTPase superfamily. Classic translation factor GTPase family. EF-G/EF-2 subfamily.

Its subcellular location is the cytoplasm. Functionally, catalyzes the GTP-dependent ribosomal translocation step during translation elongation. During this step, the ribosome changes from the pre-translocational (PRE) to the post-translocational (POST) state as the newly formed A-site-bound peptidyl-tRNA and P-site-bound deacylated tRNA move to the P and E sites, respectively. Catalyzes the coordinated movement of the two tRNA molecules, the mRNA and conformational changes in the ribosome. This Beutenbergia cavernae (strain ATCC BAA-8 / DSM 12333 / CCUG 43141 / JCM 11478 / NBRC 16432 / NCIMB 13614 / HKI 0122) protein is Elongation factor G.